Here is a 336-residue protein sequence, read N- to C-terminus: Myb family transcription factor PHL8 (336 aa).

One can recognise an HTH myb-type domain in the interval T31–S91. Residues P62–R87 constitute a DNA-binding region (H-T-H motif). The interval E100–E134 is disordered. Over residues V110–R120 the composition is skewed to basic and acidic residues. Residues T139–Q159 adopt a coiled-coil conformation. Residues L152–E157 carry the LHEQLE motif.

The protein belongs to the MYB-CC family.

It localises to the nucleus. This is Myb family transcription factor PHL8 from Arabidopsis thaliana (Mouse-ear cress).